The following is a 507-amino-acid chain: ATP synthase subunit alpha, chloroplastic (507 aa).

170 to 177 (GDRQTGKT) contacts ATP.

The protein belongs to the ATPase alpha/beta chains family. As to quaternary structure, F-type ATPases have 2 components, CF(1) - the catalytic core - and CF(0) - the membrane proton channel. CF(1) has five subunits: alpha(3), beta(3), gamma(1), delta(1), epsilon(1). CF(0) has four main subunits: a, b, b' and c.

It localises to the plastid. It is found in the chloroplast thylakoid membrane. It catalyses the reaction ATP + H2O + 4 H(+)(in) = ADP + phosphate + 5 H(+)(out). In terms of biological role, produces ATP from ADP in the presence of a proton gradient across the membrane. The alpha chain is a regulatory subunit. The protein is ATP synthase subunit alpha, chloroplastic of Ipomoea purpurea (Common morning glory).